Here is a 507-residue protein sequence, read N- to C-terminus: TOM1-like protein 2 (507 aa).

The VHS domain maps to 20–152; it reads ATDGSLQSED…ELKRKGVEFP (133 aa). Phosphoserine is present on Ser160. The tract at residues 162-210 is disordered; it reads IHTPQRSVPEVDPAATMPRSQSQQRTSAGSYSSPPPAPYSAPQAPALSV. Thr164 is modified (phosphothreonine). In terms of domain architecture, GAT spans 219 to 307; the sequence is EQIARLRSEL…VFLRYERFER (89 aa). The short motif at 329 to 334 is the Clathrin-binding element; sequence NLIDLG. Positions 467–507 are disordered; it reads RAKAAEMVPDLPSPPMEAPAPASNPSGRKKPERSEDALFAL. Over residues 498–507 the composition is skewed to basic and acidic residues; that stretch reads ERSEDALFAL.

It belongs to the TOM1 family. As to quaternary structure, interacts with clathrin, SRC and TOLLIP. Interacts with MYO6. Ubiquitously expressed with higher expression in heart and skeletal muscle.

In terms of biological role, acts as a MYO6/Myosin VI adapter protein that targets myosin VI to endocytic structures. May also play a role in recruiting clathrin to endosomes. May regulate growth factor-induced mitogenic signaling. This chain is TOM1-like protein 2 (TOM1L2), found in Homo sapiens (Human).